A 474-amino-acid chain; its full sequence is Homocitrate synthase, mitochondrial (474 aa).

The Pyruvate carboxyltransferase domain occupies 67 to 320; sequence FQIIESTLRE…KSKYKLEKLK (254 aa). 2-oxoglutarate is bound at residue Arg-75. Glu-76 contacts Mg(2+). His-135, Arg-195, and Thr-229 together coordinate 2-oxoglutarate. Mg(2+)-binding residues include His-256 and His-258. Residue His-353 is the Proton acceptor of the active site.

This sequence belongs to the alpha-IPM synthase/homocitrate synthase family. Homocitrate synthase LYS20/LYS21 subfamily. Mg(2+) is required as a cofactor. Requires Mn(2+) as cofactor.

The protein localises to the mitochondrion. It carries out the reaction acetyl-CoA + 2-oxoglutarate + H2O = (2R)-homocitrate + CoA + H(+). It functions in the pathway amino-acid biosynthesis; L-lysine biosynthesis via AAA pathway; L-alpha-aminoadipate from 2-oxoglutarate: step 1/5. In terms of biological role, catalyzes the aldol-type condensation of 2-oxoglutarate with acetyl-CoA to yield homocitrate. Carries out the first step of the alpha-aminoadipate (AAA) lysine biosynthesis pathway. The polypeptide is Homocitrate synthase, mitochondrial (lys1) (Penicillium rubens (strain ATCC 28089 / DSM 1075 / NRRL 1951 / Wisconsin 54-1255) (Penicillium chrysogenum)).